Reading from the N-terminus, the 207-residue chain is Dephospho-CoA kinase (207 aa).

One can recognise a DPCK domain in the interval 10–207 (TLGLTGGIGS…FYLTLRGGQS (198 aa)). Residue 18 to 23 (GSGKSA) coordinates ATP.

It belongs to the CoaE family.

The protein localises to the cytoplasm. The catalysed reaction is 3'-dephospho-CoA + ATP = ADP + CoA + H(+). The protein operates within cofactor biosynthesis; coenzyme A biosynthesis; CoA from (R)-pantothenate: step 5/5. Functionally, catalyzes the phosphorylation of the 3'-hydroxyl group of dephosphocoenzyme A to form coenzyme A. This Pseudomonas fluorescens (strain ATCC BAA-477 / NRRL B-23932 / Pf-5) protein is Dephospho-CoA kinase.